Here is a 568-residue protein sequence, read N- to C-terminus: C6 finger domain transcription factor BOA13 (568 aa).

Residues 14–41 (CNECHASKVRCSGERTGCRRCVYNQQKC) constitute a DNA-binding region (zn(2)-C6 fungal-type). Disordered regions lie at residues 92-114 (EANG…EGIT), 207-278 (ATSS…HHNH), and 467-490 (RSRS…FSNP). Residues 242-259 (HSDLSEKQAQHAQNDLRW) are compositionally biased toward basic and acidic residues. Positions 260 to 274 (RSQSQSYKRPTISTQ) are enriched in polar residues. Positions 470–490 (SLSTPSPRNTPSTSNSPFSNP) are enriched in low complexity.

The protein resides in the nucleus. In terms of biological role, transcription factor that probably regulates the gene clusters that mediates the biosynthesis of botcinin acid and its botcinin derivatives, acetate-derived polyketides that contribute to virulence when combined with the sesquiterpene botrydial. Botcinin acid and its derivatives have been shown to induce chlorosis and necrosis during host plant infection, but also have antifungal activities. The polypeptide is C6 finger domain transcription factor BOA13 (Botryotinia fuckeliana (strain B05.10) (Noble rot fungus)).